A 1053-amino-acid chain; its full sequence is Zinc finger and BTB domain-containing protein 11 (1053 aa).

A compositionally biased stretch (acidic residues) spans 141-156 (LDLESGEESNESEDDL). The segment at 141 to 173 (LDLESGEESNESEDDLSNFTSSPTTASKPAKKK) is disordered. The segment covering 157 to 168 (SNFTSSPTTASK) has biased composition (low complexity). In terms of domain architecture, BTB spans 214-282 (CDVTLLIEGE…AYTSVLSFDF (69 aa)). Positions 546 to 566 (LVQRGKKMKQPKRDAKENTEE) are disordered. Basic and acidic residues predominate over residues 556–566 (PKRDAKENTEE). C2H2-type zinc fingers lie at residues 569 to 591 (HKCG…KLKH) and 597 to 619 (YKCP…LIRH). A disordered region spans residues 619 to 643 (HTRKDAPSSSSSNSTSNEASGTSSE). Residues 626-642 (SSSSSNSTSNEASGTSS) show a composition bias toward low complexity. 10 C2H2-type zinc fingers span residues 651 to 673 (FICS…MLKH), 679 to 701 (HACQ…QSLH), 707 to 729 (FQCE…MSIH), 735 to 757 (YLCS…FKKH), 766 to 788 (YHCT…MNKH), 794 to 816 (FQCQ…VKSH), 822 to 846 (YRCN…KATH), 858 to 880 (RVCE…MNNH), 886 to 908 (FECL…VRTH), and 914 to 937 (YVCP…TKFH). Lysine 1043 is covalently cross-linked (Glycyl lysine isopeptide (Lys-Gly) (interchain with G-Cter in SUMO2)). Position 1050 is a phosphoserine (serine 1050).

It is found in the nucleus. Its subcellular location is the nucleolus. Functionally, may be involved in transcriptional regulation. The polypeptide is Zinc finger and BTB domain-containing protein 11 (Homo sapiens (Human)).